A 336-amino-acid chain; its full sequence is USG-1 protein homolog (336 aa).

Belongs to the aspartate-semialdehyde dehydrogenase family.

The protein is USG-1 protein homolog (usg) of Azotobacter vinelandii.